Here is a 107-residue protein sequence, read N- to C-terminus: U20-lycotoxin-Ls1b (107 aa).

The N-terminal stretch at 1–30 (MFSTSDQVSKMNSRILSALLILGIATCVIA) is a signal peptide. One can recognise a WAP domain in the interval 31–76 (GGFCPKSRHPQCNLSYKINDCCAQSDCRVGSVCCVEGCGNVCRAES). 5 cysteine pairs are disulfide-bonded: cysteine 34-cysteine 64, cysteine 42-cysteine 68, cysteine 51-cysteine 63, cysteine 52-cysteine 90, and cysteine 57-cysteine 72.

Belongs to the venom protein 11 family. 02 (wap-2) subfamily. Contains 5 disulfide bonds. Expressed by the venom gland.

It localises to the secreted. Has antibacterial activity. The chain is U20-lycotoxin-Ls1b from Lycosa singoriensis (Wolf spider).